Here is a 472-residue protein sequence, read N- to C-terminus: Ribulose bisphosphate carboxylase large chain 1 (472 aa).

Substrate is bound by residues Asn115 and Thr165. The Proton acceptor role is filled by Lys167. Residue Lys169 participates in substrate binding. Residues Lys193, Asp195, and Glu196 each contribute to the Mg(2+) site. The residue at position 193 (Lys193) is an N6-carboxylysine. His286 serves as the catalytic Proton acceptor. Arg287, His319, and Ser371 together coordinate substrate.

The protein belongs to the RuBisCO large chain family. Type I subfamily. As to quaternary structure, heterohexadecamer of 8 large chains and 8 small chains. It depends on Mg(2+) as a cofactor.

It carries out the reaction 2 (2R)-3-phosphoglycerate + 2 H(+) = D-ribulose 1,5-bisphosphate + CO2 + H2O. The enzyme catalyses D-ribulose 1,5-bisphosphate + O2 = 2-phosphoglycolate + (2R)-3-phosphoglycerate + 2 H(+). RuBisCO catalyzes two reactions: the carboxylation of D-ribulose 1,5-bisphosphate, the primary event in carbon dioxide fixation, as well as the oxidative fragmentation of the pentose substrate. Both reactions occur simultaneously and in competition at the same active site. The protein is Ribulose bisphosphate carboxylase large chain 1 of Allochromatium vinosum (strain ATCC 17899 / DSM 180 / NBRC 103801 / NCIMB 10441 / D) (Chromatium vinosum).